A 140-amino-acid chain; its full sequence is Natriuretic peptides A (140 aa).

An N-terminal signal peptide occupies residues 1-24 (MDTRGSFSCGFLLLLLIQLQPSRA). The propeptide occupies 25–111 (NPIYNLSPAK…KRLRGVQMPR (87 aa)). The disordered stretch occupies residues 55–94 (ALESNPDLQEPQTQEEIPPELTDDSDEQKAEPKLASNTPL). Positions 71 to 80 (IPPELTDDSD) are enriched in acidic residues. Cysteines 118 and 134 form a disulfide.

Belongs to the natriuretic peptide family. In terms of processing, cleaved by CORIN upon secretion to produce the functional hormone.

It is found in the secreted. Hormone playing a key role in cardiovascular homeostasis through regulation of natriuresis, diuresis, and vasodilation. Specifically binds and stimulates the cGMP production of the NPR1 receptor. Binds the clearance receptor NPR3. In Gallus gallus (Chicken), this protein is Natriuretic peptides A (NPPA).